A 404-amino-acid polypeptide reads, in one-letter code: Argininosuccinate synthase (404 aa).

Residues 10-18 and alanine 38 contribute to the ATP site; that span reads AYSGGVDTS. Position 89 (tyrosine 89) interacts with L-citrulline. Glycine 119 lines the ATP pocket. Residues threonine 121, asparagine 125, and aspartate 126 each coordinate L-aspartate. Residue asparagine 125 coordinates L-citrulline. Arginine 129, serine 177, serine 186, glutamate 262, and tyrosine 274 together coordinate L-citrulline.

Belongs to the argininosuccinate synthase family. Type 1 subfamily. In terms of assembly, homotetramer.

It is found in the cytoplasm. It catalyses the reaction L-citrulline + L-aspartate + ATP = 2-(N(omega)-L-arginino)succinate + AMP + diphosphate + H(+). The protein operates within amino-acid biosynthesis; L-arginine biosynthesis; L-arginine from L-ornithine and carbamoyl phosphate: step 2/3. In Prochlorococcus marinus (strain MIT 9515), this protein is Argininosuccinate synthase.